Here is an 828-residue protein sequence, read N- to C-terminus: Multiple RNA-binding domain-containing protein 1 (828 aa).

In terms of domain architecture, RRM 1 spans 2–89 (SRLIVKNLPP…TKISVAVAMT (88 aa)). Disordered stretches follow at residues 97 to 125 (LSSRERKRQAAQRAREDAEDDREAKKARY) and 166 to 293 (DAGA…EDPT). Composition is skewed to acidic residues over residues 195–207 (DEIDEDEDEEEES) and 214–227 (DNEEAEEDEEDPVI). Residues 241–272 (DWLRQRQTRIKEGEPEEDRENRHTESKSEGKK) are compositionally biased toward basic and acidic residues. 4 RRM domains span residues 301 to 379 (GRLF…PGKP), 485 to 557 (RVIL…KGPK), 605 to 688 (TSVF…ISNR), and 703 to 780 (SKIL…YAQA).

The protein belongs to the RRM MRD1 family.

The protein resides in the nucleus. Involved in pre-rRNA processing. The polypeptide is Multiple RNA-binding domain-containing protein 1 (MRD1) (Yarrowia lipolytica (strain CLIB 122 / E 150) (Yeast)).